A 155-amino-acid polypeptide reads, in one-letter code: MPPKKGGVTKSKAVSKKAAAVPTPKATPPGRRKSRASSVQPGDPVPQGKKRRYRPGTLALKEIRNYQRTTDLLVAKLPFARLVREIAMQFRPMDEEMRWQSQAILALQEAAEAFLVHLFEDTNLCAIHAKRVTIMQKDIQLARRIRGVWGGAGWV.

Over residues 1–24 the composition is skewed to low complexity; that stretch reads MPPKKGGVTKSKAVSKKAAAVPTP. The interval 1-56 is disordered; it reads MPPKKGGVTKSKAVSKKAAAVPTPKATPPGRRKSRASSVQPGDPVPQGKKRRYRPG. Residues 45-148 are H3-like; it reads VPQGKKRRYR…IQLARRIRGV (104 aa).

This sequence belongs to the histone H3 family. In terms of assembly, component of centromeric nucleosomes, where DNA is wrapped around a histone octamer core. The octamer contains two molecules each of H2A, H2B, hH3v/CENPA and H4 assembled in one hH3v-H4 heterotetramer and two H2A-H2B heterodimers. Interacts with the inner kinetochore. In terms of processing, ubiquitinated. Is degraded through ubiquitin-mediated proteolysis when not protected by its association to the kinetochore.

Its subcellular location is the nucleus. The protein localises to the chromosome. It is found in the centromere. Its function is as follows. Histone H3-like nucleosomal protein that is specifically found in centromeric nucleosomes. Replaces conventional H3 in the nucleosome core of centromeric chromatin that serves as an assembly site for the inner kinetochore. Required for recruitment and assembly of kinetochore proteins, mitotic progression and chromosome segregation. May serve as an epigenetic mark that propagates centromere identity through replication and cell division. The protein is Histone H3-like centromeric protein hH3v (hH3v) of Neurospora crassa (strain ATCC 24698 / 74-OR23-1A / CBS 708.71 / DSM 1257 / FGSC 987).